The primary structure comprises 359 residues: 3-dehydroquinate synthase (359 aa).

Residues 71-76, 105-109, 129-130, Lys-142, Lys-151, and 169-172 contribute to the NAD(+) site; these read DGEQFK, GVIGD, TT, and CLHT. Zn(2+)-binding residues include Glu-184, His-247, and His-264.

This sequence belongs to the sugar phosphate cyclases superfamily. Dehydroquinate synthase family. It depends on Co(2+) as a cofactor. Requires Zn(2+) as cofactor. NAD(+) serves as cofactor.

It localises to the cytoplasm. It carries out the reaction 7-phospho-2-dehydro-3-deoxy-D-arabino-heptonate = 3-dehydroquinate + phosphate. The protein operates within metabolic intermediate biosynthesis; chorismate biosynthesis; chorismate from D-erythrose 4-phosphate and phosphoenolpyruvate: step 2/7. In terms of biological role, catalyzes the conversion of 3-deoxy-D-arabino-heptulosonate 7-phosphate (DAHP) to dehydroquinate (DHQ). This chain is 3-dehydroquinate synthase, found in Shewanella putrefaciens (strain CN-32 / ATCC BAA-453).